A 566-amino-acid chain; its full sequence is NAD-dependent malic enzyme 3 (566 aa).

The Proton donor role is filled by Y105. Residue K178 is the Proton acceptor of the active site. The a divalent metal cation site is built by E249, D250, and D273. Residues A306–A309, N423, and N468 each bind NAD(+).

This sequence belongs to the malic enzymes family. Mg(2+) is required as a cofactor. The cofactor is Mn(2+).

The enzyme catalyses (S)-malate + NAD(+) = pyruvate + CO2 + NADH. The catalysed reaction is oxaloacetate + H(+) = pyruvate + CO2. In terms of biological role, catalyzes the decarboxylation of malate to pyruvate. Can use NAD and NADP, but with a strong preference for NAD. Can also catalyze the decarboxylation of oxaloacetate. Involved in keeping the ATP levels high. The chain is NAD-dependent malic enzyme 3 (malS) from Bacillus subtilis (strain 168).